Here is a 465-residue protein sequence, read N- to C-terminus: UDP-N-acetylmuramate--L-alanine ligase (465 aa).

Position 112-118 (112-118) interacts with ATP; that stretch reads GTHGKTT.

Belongs to the MurCDEF family.

Its subcellular location is the cytoplasm. The catalysed reaction is UDP-N-acetyl-alpha-D-muramate + L-alanine + ATP = UDP-N-acetyl-alpha-D-muramoyl-L-alanine + ADP + phosphate + H(+). It functions in the pathway cell wall biogenesis; peptidoglycan biosynthesis. Functionally, cell wall formation. The protein is UDP-N-acetylmuramate--L-alanine ligase of Burkholderia cenocepacia (strain HI2424).